The sequence spans 104 residues: Protein enhancer of rudimentary (104 aa).

At Thr18 the chain carries Phosphothreonine; by CK2. Ser24 bears the Phosphoserine; by CK2 mark.

Belongs to the E(R) family.

Acts as an enhancer of the rudimentary gene. Has a role in pyrimidine biosynthesis and the cell cycle. This chain is Protein enhancer of rudimentary (e(r)), found in Drosophila virilis (Fruit fly).